Consider the following 756-residue polypeptide: Serine/threonine-protein kinase DCLK2 (756 aa).

The disordered stretch occupies residues 1-44 (MASTRSIELEHFEERDKRPRPGSRRGAPSSSGGSSISGPKGNGL). Basic and acidic residues predominate over residues 7-19 (IELEHFEERDKRP). Over residues 24–43 (RRGAPSSSGGSSISGPKGNG) the composition is skewed to low complexity. Thr61 is subject to Phosphothreonine. Doublecortin domains follow at residues 72-158 (KKAR…VDYT) and 196-279 (KLVT…AQDD). Low complexity-rich tracts occupy residues 301 to 311 (KYSGSRSPGFS) and 323 to 346 (TPSSQLSTPKSTKSSSSSPTSPGS). Residues 301-375 (KYSGSRSPGF…GPELDRCLSP (75 aa)) form a disordered region. Over residues 353 to 364 (ISAQGRSSSNVN) the composition is skewed to polar residues. Ser361 is modified (phosphoserine). The Protein kinase domain maps to 393–650 (YRIGKVIGDG…AGEILSHPWV (258 aa)). ATP is bound by residues 399–407 (IGDGNFAVV) and Lys422. Asp514 acts as the Proton acceptor in catalysis. Ser646 is subject to Phosphoserine. Thr665 is modified (phosphothreonine). Residues 707–756 (QDSSRPSREQTSPVPPSAQEAPPPLESPRPPGPPATSGCDLAGTWRRHRD) are disordered. Over residues 719 to 740 (PVPPSAQEAPPPLESPRPPGPP) the composition is skewed to pro residues.

This sequence belongs to the protein kinase superfamily. CAMK Ser/Thr protein kinase family. CaMK subfamily. In terms of assembly, binds to and stabilizes microtubules. Interacts with MAPK8IP1/JIP-1, MAPK8IP2/JIP-2, MAPK9/JNK2, PPP1R9B/NEURABIN-2 and actin. In terms of processing, autophosphorylated. As to expression, expressed in the central and peripheral nervous system including the brain, spinal cord, cranial and dorsal root ganglia and in the parasympathetic ganglia. Present in neurons, but not in glial cells, in most forebrain areas. Strong expression in the hippocampal CA1 pyramidal cell layer. Expressed in the photoreceptor sensory cilium complex and in eyes. Also detected in individual cells of the olfactory epithelium.

It localises to the cytoplasm. The protein localises to the cytoskeleton. It carries out the reaction L-seryl-[protein] + ATP = O-phospho-L-seryl-[protein] + ADP + H(+). The catalysed reaction is L-threonyl-[protein] + ATP = O-phospho-L-threonyl-[protein] + ADP + H(+). In terms of biological role, protein kinase with a significantly reduced Ca(2+)+/CAM affinity and dependence compared to other members of the CaMK family. May play a role in the down-regulation of CRE-dependent gene activation probably by phosphorylation of the CREB coactivator CRTC2/TORC2 and the resulting retention of TORC2 in the cytoplasm. In Mus musculus (Mouse), this protein is Serine/threonine-protein kinase DCLK2 (Dclk2).